The chain runs to 1103 residues: Voltage-dependent calcium channel subunit alpha-2/delta-1 (1103 aa).

The signal sequence occupies residues 1-24 (MAAGCLLALTLTLFQSGLIGPSSE). Over 25-1073 (EPFPSPVTIK…VLEDYTDCGG (1049 aa)) the chain is Extracellular. N92 carries N-linked (GlcNAc...) asparagine glycosylation. Phosphoserine is present on S119. N136 and N184 each carry an N-linked (GlcNAc...) asparagine glycan. The region spanning 253–430 (DMLILVDVSG…INTQEYLDVL (178 aa)) is the VWFA domain. Residues D259, S261, and S263 each contribute to the a divalent metal cation site. The MIDAS-like motif motif lies at 259-263 (DVSGS). N324 and N348 each carry an N-linked (GlcNAc...) asparagine glycan. C404 and C1059 form a disulfide bridge. Residues 446–537 (WTNVYLDALE…QPKPIGVGIP (92 aa)) form the Cache domain. 3 N-linked (GlcNAc...) asparagine glycosylation sites follow: N613, N781, and N888. The helical transmembrane segment at 1074 to 1094 (VSGLNPSLWSIFGLQFILLWL) threads the bilayer. Residues 1095–1103 (VSGSRHYLL) lie on the Cytoplasmic side of the membrane.

It belongs to the calcium channel subunit alpha-2/delta family. As to quaternary structure, dimer formed of alpha-2-1 and delta-1 chains; disulfide-linked. Voltage-dependent calcium channels are multisubunit complexes, consisting of alpha-1 (CACNA1), alpha-2 (CACNA2D), beta (CACNB) and delta (CACNA2D) subunits in a 1:1:1:1 ratio. In terms of processing, proteolytically processed into subunits alpha-2-1 and delta-1 that are disulfide-linked. Isoform 2A is expressed in skeletal muscle and aorta. Isoform 2B is expressed in brain. Isoform 2C is expressed in heart. Isoform 2D is expressed in heart and smooth muscle. Isoform 2E is expressed in smooth muscle. All five isoforms are expressed in the cardiovascular system.

It is found in the membrane. It localises to the cell membrane. Its function is as follows. The alpha-2/delta subunit of voltage-dependent calcium channels regulates calcium current density and activation/inactivation kinetics of the calcium channel. Plays an important role in excitation-contraction coupling. This chain is Voltage-dependent calcium channel subunit alpha-2/delta-1 (Cacna2d1), found in Mus musculus (Mouse).